The chain runs to 545 residues: Chaperonin GroEL (545 aa).

Residues 29–32 (TLGP), K50, 86–90 (DGTTT), G415, and D495 contribute to the ATP site.

It belongs to the chaperonin (HSP60) family. Forms a cylinder of 14 subunits composed of two heptameric rings stacked back-to-back. Interacts with the co-chaperonin GroES.

It is found in the cytoplasm. It carries out the reaction ATP + H2O + a folded polypeptide = ADP + phosphate + an unfolded polypeptide.. In terms of biological role, together with its co-chaperonin GroES, plays an essential role in assisting protein folding. The GroEL-GroES system forms a nano-cage that allows encapsulation of the non-native substrate proteins and provides a physical environment optimized to promote and accelerate protein folding. The chain is Chaperonin GroEL from Porphyromonas gingivalis (strain ATCC 33277 / DSM 20709 / CIP 103683 / JCM 12257 / NCTC 11834 / 2561).